The sequence spans 160 residues: CXXC motif containing zinc binding protein (160 aa).

Zn(2+) contacts are provided by cysteine 33, cysteine 36, cysteine 67, and cysteine 70. A Phosphoserine modification is found at serine 75.

The protein belongs to the UPF0587 family. Monomer.

This Bos taurus (Bovine) protein is CXXC motif containing zinc binding protein (CZIB).